The following is an 805-amino-acid chain: N-(5-amino-5-carboxypentanoyl)-L-cysteinyl-D-valine synthase (805 aa).

Residues 783–805 (PDTGGGAVGSTTTGGVRGELREI) form a disordered region.

It belongs to the ATP-dependent AMP-binding enzyme family. The cofactor is pantetheine 4'-phosphate.

The enzyme catalyses L-2-aminoadipate + L-valine + L-cysteine + 3 ATP + H2O = N-[(5S)-5-amino-5-carboxypentanoyl]-L-cysteinyl-D-valine + 3 AMP + 3 diphosphate + 3 H(+). It participates in antibiotic biosynthesis; penicillin G biosynthesis; penicillin G from L-alpha-aminoadipate and L-cysteine and L-valine: step 1/3. Each of the constituent amino acids of ACV are activated as aminoacyl-adenylates with peptide bonds formed through the participation of amino acid thioester intermediates. The chain is N-(5-amino-5-carboxypentanoyl)-L-cysteinyl-D-valine synthase (pcbAB) from Streptomyces clavuligerus.